The following is a 357-amino-acid chain: Protein RecA (357 aa).

ATP is bound at residue 79–86 (GPESSGKT).

The protein belongs to the RecA family.

Its subcellular location is the cytoplasm. Can catalyze the hydrolysis of ATP in the presence of single-stranded DNA, the ATP-dependent uptake of single-stranded DNA by duplex DNA, and the ATP-dependent hybridization of homologous single-stranded DNAs. It interacts with LexA causing its activation and leading to its autocatalytic cleavage. This is Protein RecA from Chloroherpeton thalassium (strain ATCC 35110 / GB-78).